We begin with the raw amino-acid sequence, 180 residues long: Adenine phosphoribosyltransferase (180 aa).

Alanine 2 is modified (N-acetylalanine). Phosphoserine is present on residues serine 15 and serine 30. Residue tyrosine 60 is modified to Phosphotyrosine. At serine 66 the chain carries Phosphoserine. Threonine 135 bears the Phosphothreonine mark.

This sequence belongs to the purine/pyrimidine phosphoribosyltransferase family. Homodimer.

It localises to the cytoplasm. It catalyses the reaction AMP + diphosphate = 5-phospho-alpha-D-ribose 1-diphosphate + adenine. It functions in the pathway purine metabolism; AMP biosynthesis via salvage pathway; AMP from adenine: step 1/1. Functionally, catalyzes a salvage reaction resulting in the formation of AMP, that is energically less costly than de novo synthesis. This is Adenine phosphoribosyltransferase from Bos taurus (Bovine).